The chain runs to 521 residues: U4/U6 small nuclear ribonucleoprotein Prp4 (521 aa).

K26 carries the N6-acetyllysine modification. WD repeat units lie at residues 228–267 (GDDR…LLHT), 270–317 (GHNT…PVAD), 320–359 (GHTV…EILH), 362–401 (GHSM…CIMF), 404–443 (GHLK…CVYT), 446–486 (AHQN…PLKT), and 489–521 (GHEG…WMAE).

As to quaternary structure, component of the precatalytic spliceosome (spliceosome B complex). Component of the U4/U6-U5 tri-snRNP complex, a building block of the precatalytic spliceosome (spliceosome B complex). The U4/U6-U5 tri-snRNP complex is composed of the U4, U6 and U5 snRNAs and at least PRPF3, PRPF4, PRPF6, PRPF8, PRPF31, SNRNP200, TXNL4A, SNRNP40, SNRPB, SNRPD1, SNRPD2, SNRPD3, SNRPE, SNRPF, SNRPG, DDX23, CD2BP2, PPIH, SNU13, EFTUD2, SART1 and USP39, plus LSM2, LSM3, LSM4, LSM5, LSM6, LSM7 and LSM8. Interacts directly with PRPF18, PPIH and PRPF3. Part of a heteromeric complex containing PPIH, PRPF3 and PRPF4 that is stable in the absence of RNA. Interacts with ERCC6.

The protein localises to the nucleus. It is found in the nucleus speckle. Functionally, plays a role in pre-mRNA splicing as component of the U4/U6-U5 tri-snRNP complex that is involved in spliceosome assembly, and as component of the precatalytic spliceosome (spliceosome B complex). This chain is U4/U6 small nuclear ribonucleoprotein Prp4 (Prpf4), found in Mus musculus (Mouse).